The chain runs to 421 residues: Testin (421 aa).

The 108-residue stretch at 92-199 folds into the PET domain; it reads MILTNPVAAK…GDVKLPYEMG (108 aa). The tract at residues 133-164 is disordered; the sequence is EKQPVAGSEGAQYRKKQLAKQLPAHDQDPSKC. Residues 155–164 are compositionally biased toward basic and acidic residues; that stretch reads PAHDQDPSKC. 3 LIM zinc-binding domains span residues 234–297, 299–359, and 362–421; these read YFCY…CDSE, PRCA…NHAV, and QGCH…KMMS.

It belongs to the prickle / espinas / testin family. As to quaternary structure, interacts via LIM domain 1 with ZYX. Interacts (via LIM domain 3) with ENAH and VASP. Interacts with ALKBH4, talin, actin, alpha-actinin, GRIP1 and PXN. Interacts (via LIM domain 2) with ACTL7A (via N-terminus). Heterodimer with ACTL7A; the heterodimer interacts with ENAH to form a heterotrimer.

It is found in the cytoplasm. It localises to the cell junction. The protein localises to the focal adhesion. Functionally, scaffold protein that may play a role in cell adhesion, cell spreading and in the reorganization of the actin cytoskeleton. Plays a role in the regulation of cell proliferation. May act as a tumor suppressor. The sequence is that of Testin (TES) from Oryctolagus cuniculus (Rabbit).